The primary structure comprises 363 residues: D-alanine--D-alanine ligase (363 aa).

Residues 146-352 (KLCAADAGVA…FTALIDKLLH (207 aa)) enclose the ATP-grasp domain. 179–234 (DSTFGYPLFVKPASLGSSVGISKVHLPAALPEALKVACSYDRKILVEAAVSGKEIE) is an ATP binding site. 3 residues coordinate Mg(2+): aspartate 305, glutamate 319, and asparagine 321.

Belongs to the D-alanine--D-alanine ligase family. The cofactor is Mg(2+). It depends on Mn(2+) as a cofactor.

It is found in the cytoplasm. The enzyme catalyses 2 D-alanine + ATP = D-alanyl-D-alanine + ADP + phosphate + H(+). It participates in cell wall biogenesis; peptidoglycan biosynthesis. Functionally, cell wall formation. The sequence is that of D-alanine--D-alanine ligase from Chlorobium limicola (strain DSM 245 / NBRC 103803 / 6330).